The following is a 151-amino-acid chain: Ubiquitin-conjugating enzyme E2 W (151 aa).

M1 is covalently cross-linked (Peptide (Met-Gly) (interchain with G-Cter in ubiquitin)). Residues 3–151 (SMQKRLQKEL…TKWWYHDDTC (149 aa)) enclose the UBC core domain. C91 functions as the Glycyl thioester intermediate in the catalytic mechanism.

This sequence belongs to the ubiquitin-conjugating enzyme family. In terms of assembly, homodimer. Interacts with FANCL. Interacts with STUB1/CHIP. In terms of processing, ubiquitinated in vitro in the presence of FANCL. Autoubiquitinated at Met-1.

The protein resides in the nucleus. The enzyme catalyses S-ubiquitinyl-[E1 ubiquitin-activating enzyme]-L-cysteine + [E2 ubiquitin-conjugating enzyme]-L-cysteine = [E1 ubiquitin-activating enzyme]-L-cysteine + S-ubiquitinyl-[E2 ubiquitin-conjugating enzyme]-L-cysteine.. It catalyses the reaction S-ubiquitinyl-[E1 ubiquitin-activating enzyme]-L-cysteine + [acceptor protein]-N-terminal-amino acid = [E1 ubiquitin-activating enzyme]-L-cysteine + N-terminal-ubiquitinyl-[acceptor protein].. The protein operates within protein modification; protein ubiquitination. Accepts ubiquitin from the E1 complex and catalyzes its covalent attachment to other proteins. Specifically monoubiquitinates the N-terminus of various substrates, including ATXN3, MAPT/TAU, POLR2H/RPB8 and STUB1/CHIP, by recognizing backbone atoms of disordered N-termini. Involved in degradation of misfolded chaperone substrates by mediating monoubiquitination of STUB1/CHIP, leading to recruitment of ATXN3 to monoubiquitinated STUB1/CHIP, and restriction of the length of ubiquitin chain attached to STUB1/CHIP substrates by ATXN3. After UV irradiation, but not after mitomycin-C (MMC) treatment, acts as a specific E2 ubiquitin-conjugating enzyme for the Fanconi anemia complex by associating with E3 ubiquitin-protein ligase FANCL and catalyzing monoubiquitination of FANCD2, a key step in the DNA damage pathway. In vitro catalyzes 'Lys-11'-linked polyubiquitination. UBE2W-catalyzed ubiquitination also occurs in the presence of inactive RING/U-box type E3s, i.e. lacking the active site cysteine residues to form thioester bonds with ubiquitin, or even in the absence of E3, albeit at a slower rate. In Bos taurus (Bovine), this protein is Ubiquitin-conjugating enzyme E2 W (UBE2W).